The chain runs to 460 residues: A-type ATP synthase subunit B (460 aa).

It belongs to the ATPase alpha/beta chains family. In terms of assembly, has multiple subunits with at least A(3), B(3), C, D, E, F, H, I and proteolipid K(x).

The protein resides in the cell membrane. Its function is as follows. Component of the A-type ATP synthase that produces ATP from ADP in the presence of a proton gradient across the membrane. The B chain is a regulatory subunit. This chain is A-type ATP synthase subunit B, found in Methanosarcina barkeri.